Consider the following 635-residue polypeptide: Probable Xaa-Pro aminopeptidase P (635 aa).

Mn(2+) is bound by residues aspartate 432, aspartate 443, glutamate 541, and glutamate 555.

This sequence belongs to the peptidase M24B family. Requires Mn(2+) as cofactor.

The enzyme catalyses Release of any N-terminal amino acid, including proline, that is linked to proline, even from a dipeptide or tripeptide.. Catalyzes the removal of a penultimate prolyl residue from the N-termini of peptides. The chain is Probable Xaa-Pro aminopeptidase P (AMPP) from Arthroderma gypseum (strain ATCC MYA-4604 / CBS 118893) (Microsporum gypseum).